The following is a 224-amino-acid chain: ATP-dependent dethiobiotin synthetase BioD (224 aa).

Thr-18 is a binding site for Mg(2+). The active site involves Lys-39. Ser-43 is a substrate binding site. Mg(2+)-binding residues include Asp-56 and Glu-117. Residues Asp-56, 117-120 (EGVG), and 177-178 (NE) contribute to the ATP site.

This sequence belongs to the dethiobiotin synthetase family. In terms of assembly, homodimer. The cofactor is Mg(2+).

The protein localises to the cytoplasm. It catalyses the reaction (7R,8S)-7,8-diammoniononanoate + CO2 + ATP = (4R,5S)-dethiobiotin + ADP + phosphate + 3 H(+). The protein operates within cofactor biosynthesis; biotin biosynthesis; biotin from 7,8-diaminononanoate: step 1/2. Functionally, catalyzes a mechanistically unusual reaction, the ATP-dependent insertion of CO2 between the N7 and N8 nitrogen atoms of 7,8-diaminopelargonic acid (DAPA, also called 7,8-diammoniononanoate) to form a ureido ring. The polypeptide is ATP-dependent dethiobiotin synthetase BioD (Xanthomonas axonopodis pv. citri (strain 306)).